The chain runs to 143 residues: uncharacterized protein (143 aa).

Residues 111–143 are disordered; that stretch reads VTQDISHTSGKSPTPKAKSSSPKKSKKKNWIPL. A compositionally biased stretch (low complexity) spans 119–130; sequence SGKSPTPKAKSS. Positions 131–143 are enriched in basic residues; it reads SPKKSKKKNWIPL.

It belongs to the chlamydial CPn_0742/CT_635/TC_0003 family.

This is an uncharacterized protein from Chlamydia muridarum (strain MoPn / Nigg).